Reading from the N-terminus, the 116-residue chain is Putative iron-sulfur cluster insertion protein ErpA (116 aa).

Iron-sulfur cluster contacts are provided by Cys-44, Cys-108, and Cys-110.

This sequence belongs to the HesB/IscA family. In terms of assembly, homodimer. The cofactor is iron-sulfur cluster.

Required for insertion of 4Fe-4S clusters. This Janthinobacterium sp. (strain Marseille) (Minibacterium massiliensis) protein is Putative iron-sulfur cluster insertion protein ErpA.